The following is a 246-amino-acid chain: Zinc import ATP-binding protein ZnuC (246 aa).

The region spanning 24 to 243 (LKIENLALAY…RTLNEIFSSY (220 aa)) is the ABC transporter domain. 56–63 (GPNGGGKT) contacts ATP.

The protein belongs to the ABC transporter superfamily. Zinc importer (TC 3.A.1.15.5) family. The complex is composed of two ATP-binding proteins (ZnuC), two transmembrane proteins (ZnuB) and a solute-binding protein (ZnuA).

The protein localises to the cell membrane. It catalyses the reaction Zn(2+)(out) + ATP(in) + H2O(in) = Zn(2+)(in) + ADP(in) + phosphate(in) + H(+)(in). Part of the ABC transporter complex ZnuABC involved in zinc import. Responsible for energy coupling to the transport system. This chain is Zinc import ATP-binding protein ZnuC, found in Wolbachia pipientis wMel.